Reading from the N-terminus, the 435-residue chain is Adenylosuccinate synthetase (435 aa).

Residues 13–19 (GDEGKGK) and 41–43 (GHT) each bind GTP. Aspartate 14 (proton acceptor) is an active-site residue. Mg(2+) contacts are provided by aspartate 14 and glycine 41. Residues 14-17 (DEGK), 39-42 (NAGH), threonine 131, arginine 145, glutamine 226, threonine 241, and arginine 309 each bind IMP. Histidine 42 serves as the catalytic Proton donor. Substrate is bound at residue 305-311 (TVTGRKR). Residues arginine 311, 337-339 (KLD), and 419-421 (STG) contribute to the GTP site.

The protein belongs to the adenylosuccinate synthetase family. As to quaternary structure, homodimer. Mg(2+) is required as a cofactor.

Its subcellular location is the cytoplasm. It catalyses the reaction IMP + L-aspartate + GTP = N(6)-(1,2-dicarboxyethyl)-AMP + GDP + phosphate + 2 H(+). It participates in purine metabolism; AMP biosynthesis via de novo pathway; AMP from IMP: step 1/2. In terms of biological role, plays an important role in the de novo pathway of purine nucleotide biosynthesis. Catalyzes the first committed step in the biosynthesis of AMP from IMP. The protein is Adenylosuccinate synthetase of Dechloromonas aromatica (strain RCB).